A 146-amino-acid chain; its full sequence is Snaclec 1 (146 aa).

Positions 1–23 (MGRFIFISFGLLVVFLSLSGTEA) are cleaved as a signal peptide. Disulfide bonds link Cys25–Cys36, Cys53–Cys142, and Cys119–Cys134. The region spanning 32 to 143 (YEGHCYRVFD…CRNYGHFVCK (112 aa)) is the C-type lectin domain.

The protein belongs to the snaclec family. As to quaternary structure, heterodimer; disulfide-linked. As to expression, expressed by the venom gland.

It localises to the secreted. Interferes with one step of hemostasis (modulation of platelet aggregation, or coagulation cascade, for example). This chain is Snaclec 1, found in Bitis arietans (African puff adder).